Here is a 144-residue protein sequence, read N- to C-terminus: Cytochrome c-type biogenesis protein CcmE (144 aa).

The Cytoplasmic segment spans residues 1–7 (MTRKQKR). The helical; Signal-anchor for type II membrane protein transmembrane segment at 8–28 (LAVIGSGMGFLALAAALTFYA) threads the bilayer. Topologically, residues 29 to 144 (LGQQTSYFYM…LKKDGLWQEQ (116 aa)) are periplasmic. H122 and Y126 together coordinate heme.

Belongs to the CcmE/CycJ family.

It is found in the cell inner membrane. Functionally, heme chaperone required for the biogenesis of c-type cytochromes. Transiently binds heme delivered by CcmC and transfers the heme to apo-cytochromes in a process facilitated by CcmF and CcmH. In Chelativorans sp. (strain BNC1), this protein is Cytochrome c-type biogenesis protein CcmE.